A 132-amino-acid polypeptide reads, in one-letter code: Protein NrdI (132 aa).

Belongs to the NrdI family.

Functionally, probably involved in ribonucleotide reductase function. The polypeptide is Protein NrdI (Agrobacterium fabrum (strain C58 / ATCC 33970) (Agrobacterium tumefaciens (strain C58))).